The sequence spans 386 residues: Patatin-2-Kuras 3 (386 aa).

Residues 1–23 (MATTKSVLVLFFMILATTSSTCA) form the signal peptide. In terms of domain architecture, PNPLA spans 32–229 (LSIDGGGIKG…TVGDPALLSL (198 aa)). Positions 36-41 (GGGIKG) match the GXGXXG motif. Residues 75–79 (GTSTG) carry the GXSXG motif. Residue S77 is the Nucleophile of the active site. N115 carries N-linked (GlcNAc...) asparagine glycosylation. D215 serves as the catalytic Proton acceptor. A DGA/G motif is present at residues 215-217 (DGA). Residues 321–384 (ENALTGTTTE…DRKKLRANKA (64 aa)) are a coiled coil.

This sequence belongs to the patatin family. Tuber.

It localises to the vacuole. Probable lipolytic acyl hydrolase (LAH), an activity which is thought to be involved in the response of tubers to pathogens. The sequence is that of Patatin-2-Kuras 3 (pat2-k3) from Solanum tuberosum (Potato).